A 129-amino-acid chain; its full sequence is D-ribose pyranase (129 aa).

Residue H20 is the Proton donor of the active site. Substrate contacts are provided by residues D28, H96, and 118-120 (YAN).

Belongs to the RbsD / FucU family. RbsD subfamily. As to quaternary structure, homodecamer.

The protein localises to the cytoplasm. The catalysed reaction is beta-D-ribopyranose = beta-D-ribofuranose. The protein operates within carbohydrate metabolism; D-ribose degradation; D-ribose 5-phosphate from beta-D-ribopyranose: step 1/2. In terms of biological role, catalyzes the interconversion of beta-pyran and beta-furan forms of D-ribose. This is D-ribose pyranase from Staphylococcus haemolyticus (strain JCSC1435).